A 79-amino-acid chain; its full sequence is Acyl carrier protein (79 aa).

Residues 2 to 77 (STIEERVKKI…QAIDYVKSHV (76 aa)) form the Carrier domain. Residue Ser37 is modified to O-(pantetheine 4'-phosphoryl)serine.

This sequence belongs to the acyl carrier protein (ACP) family. In terms of processing, 4'-phosphopantetheine is transferred from CoA to a specific serine of apo-ACP by AcpS. This modification is essential for activity because fatty acids are bound in thioester linkage to the sulfhydryl of the prosthetic group.

The protein localises to the cytoplasm. Its pathway is lipid metabolism; fatty acid biosynthesis. Functionally, carrier of the growing fatty acid chain in fatty acid biosynthesis. The sequence is that of Acyl carrier protein from Xanthomonas oryzae pv. oryzae (strain MAFF 311018).